The following is a 326-amino-acid chain: Biotin synthase (326 aa).

The 228-residue stretch at 47-274 folds into the Radical SAM core domain; it reads NEVQVSSLLS…ASRVRLSAGR (228 aa). Residues C62, C66, and C69 each coordinate [4Fe-4S] cluster. The [2Fe-2S] cluster site is built by C106, C137, C197, and R269.

This sequence belongs to the radical SAM superfamily. Biotin synthase family. In terms of assembly, homodimer. [4Fe-4S] cluster is required as a cofactor. It depends on [2Fe-2S] cluster as a cofactor.

It catalyses the reaction (4R,5S)-dethiobiotin + (sulfur carrier)-SH + 2 reduced [2Fe-2S]-[ferredoxin] + 2 S-adenosyl-L-methionine = (sulfur carrier)-H + biotin + 2 5'-deoxyadenosine + 2 L-methionine + 2 oxidized [2Fe-2S]-[ferredoxin]. The protein operates within cofactor biosynthesis; biotin biosynthesis; biotin from 7,8-diaminononanoate: step 2/2. Functionally, catalyzes the conversion of dethiobiotin (DTB) to biotin by the insertion of a sulfur atom into dethiobiotin via a radical-based mechanism. This is Biotin synthase from Methylococcus capsulatus (strain ATCC 33009 / NCIMB 11132 / Bath).